The sequence spans 493 residues: Aluminum-activated malate transporter 1 (493 aa).

Transmembrane regions (helical) follow at residues Val-28–Thr-48, Phe-51–Gly-71, Thr-104–Val-124, Lys-133–Phe-153, and Val-169–Gly-189. Phosphoserine is present on residues Ser-320 and Ser-327. Residue Thr-385 is modified to Phosphothreonine. The segment covering Asp-441 to Arg-452 has biased composition (basic and acidic residues). Positions Asp-441–Cys-460 are disordered.

This sequence belongs to the aromatic acid exporter (TC 2.A.85) family. Post-translationally, phosphorylated. A reversible phosphorylation is required for activation. As to expression, expressed in roots, but not in shoots. Detected in the root apex in absence of aluminum stress and in root apices, the stele and endodermis of the elongating zone of primary and lateral roots after aluminum stress. Not expressed in cortical and epidermal cells.

The protein localises to the cell membrane. Its activity is regulated as follows. Activated by external aluminum. Functionally, malate transporter critical for aluminum tolerance. The STOP1 transcription factor is required for ALMT1 expression. This Arabidopsis thaliana (Mouse-ear cress) protein is Aluminum-activated malate transporter 1 (ALMT1).